The primary structure comprises 292 residues: Ribosomal protein L11 methyltransferase (292 aa).

Residues threonine 145, glycine 166, aspartate 188, and asparagine 229 each coordinate S-adenosyl-L-methionine.

Belongs to the methyltransferase superfamily. PrmA family.

Its subcellular location is the cytoplasm. The enzyme catalyses L-lysyl-[protein] + 3 S-adenosyl-L-methionine = N(6),N(6),N(6)-trimethyl-L-lysyl-[protein] + 3 S-adenosyl-L-homocysteine + 3 H(+). Functionally, methylates ribosomal protein L11. This chain is Ribosomal protein L11 methyltransferase, found in Alteromonas mediterranea (strain DSM 17117 / CIP 110805 / LMG 28347 / Deep ecotype).